We begin with the raw amino-acid sequence, 312 residues long: GDP-L-fucose synthase (312 aa).

Residue 11–17 (GGRGMVG) participates in NADP(+) binding. Tyr136 (proton donor/acceptor) is an active-site residue. Residues Lys140 and His179 each contribute to the NADP(+) site. The substrate site is built by Lys187, Trp202, and Arg209.

Belongs to the NAD(P)-dependent epimerase/dehydratase family. Fucose synthase subfamily.

The enzyme catalyses GDP-beta-L-fucose + NADP(+) = GDP-4-dehydro-alpha-D-rhamnose + NADPH + H(+). Its pathway is nucleotide-sugar biosynthesis; GDP-L-fucose biosynthesis via de novo pathway; GDP-L-fucose from GDP-alpha-D-mannose: step 2/2. Its function is as follows. Catalyzes the two-step NADP-dependent conversion of GDP-4-dehydro-6-deoxy-D-mannose to GDP-fucose, involving an epimerase and a reductase reaction. The chain is GDP-L-fucose synthase from Azorhizobium caulinodans (strain ATCC 43989 / DSM 5975 / JCM 20966 / LMG 6465 / NBRC 14845 / NCIMB 13405 / ORS 571).